Reading from the N-terminus, the 199-residue chain is dITP/XTP pyrophosphatase (199 aa).

Residue 8-13 coordinates substrate; the sequence is THNRNK. Asp-68 functions as the Proton acceptor in the catalytic mechanism. Asp-68 serves as a coordination point for Mg(2+). Substrate-binding positions include Ser-69, 151 to 154, Lys-174, and 179 to 180; these read HGYD and HR.

It belongs to the HAM1 NTPase family. As to quaternary structure, homodimer. The cofactor is Mg(2+).

It catalyses the reaction XTP + H2O = XMP + diphosphate + H(+). The catalysed reaction is dITP + H2O = dIMP + diphosphate + H(+). It carries out the reaction ITP + H2O = IMP + diphosphate + H(+). Its function is as follows. Pyrophosphatase that catalyzes the hydrolysis of nucleoside triphosphates to their monophosphate derivatives, with a high preference for the non-canonical purine nucleotides XTP (xanthosine triphosphate), dITP (deoxyinosine triphosphate) and ITP. Seems to function as a house-cleaning enzyme that removes non-canonical purine nucleotides from the nucleotide pool, thus preventing their incorporation into DNA/RNA and avoiding chromosomal lesions. The polypeptide is dITP/XTP pyrophosphatase (Leifsonia xyli subsp. xyli (strain CTCB07)).